A 53-amino-acid chain; its full sequence is ATP synthase F(0) complex subunit 8 (53 aa).

A helical membrane pass occupies residues 8 to 24; the sequence is PWLTTFLIVWISLIVIL.

The protein belongs to the ATPase protein 8 family. As to quaternary structure, component of the ATP synthase complex composed at least of ATP5F1A/subunit alpha, ATP5F1B/subunit beta, ATP5MC1/subunit c (homooctomer), MT-ATP6/subunit a, MT-ATP8/subunit 8, ATP5ME/subunit e, ATP5MF/subunit f, ATP5MG/subunit g, ATP5MK/subunit k, ATP5MJ/subunit j, ATP5F1C/subunit gamma, ATP5F1D/subunit delta, ATP5F1E/subunit epsilon, ATP5PF/subunit F6, ATP5PB/subunit b, ATP5PD/subunit d, ATP5PO/subunit OSCP. ATP synthase complex consists of a soluble F(1) head domain (subunits alpha(3) and beta(3)) - the catalytic core - and a membrane F(0) domain - the membrane proton channel (subunits c, a, 8, e, f, g, k and j). These two domains are linked by a central stalk (subunits gamma, delta, and epsilon) rotating inside the F1 region and a stationary peripheral stalk (subunits F6, b, d, and OSCP).

It is found in the mitochondrion membrane. In terms of biological role, subunit 8, of the mitochondrial membrane ATP synthase complex (F(1)F(0) ATP synthase or Complex V) that produces ATP from ADP in the presence of a proton gradient across the membrane which is generated by electron transport complexes of the respiratory chain. ATP synthase complex consist of a soluble F(1) head domain - the catalytic core - and a membrane F(1) domain - the membrane proton channel. These two domains are linked by a central stalk rotating inside the F(1) region and a stationary peripheral stalk. During catalysis, ATP synthesis in the catalytic domain of F(1) is coupled via a rotary mechanism of the central stalk subunits to proton translocation. In vivo, can only synthesize ATP although its ATP hydrolase activity can be activated artificially in vitro. Part of the complex F(0) domain. The protein is ATP synthase F(0) complex subunit 8 of Alligator mississippiensis (American alligator).